Reading from the N-terminus, the 221-residue chain is Endo-1,4-beta-xylanase I (221 aa).

Positions 1–30 are cleaved as a signal peptide; sequence MVSFTSIITAAVAATGALAAPATDVSLVAR. Residues 31-219 form the GH11 domain; that stretch reads QNTPNGEGTH…STGNAQITVN (189 aa). Glutamate 115 serves as the catalytic Nucleophile. The interval 126–157 is disordered; the sequence is DPSSQSQNKGTVTSDGSSYKIAQSTRTNQPSI. The Proton donor role is filled by glutamate 206.

This sequence belongs to the glycosyl hydrolase 11 (cellulase G) family. Post-translationally, the N-terminus is blocked.

The protein localises to the secreted. It catalyses the reaction Endohydrolysis of (1-&gt;4)-beta-D-xylosidic linkages in xylans.. It participates in glycan degradation; xylan degradation. Its function is as follows. Major xylan-degrading enzyme. Contributes to the hydrolysis of arabinoxylan, the major component of maize cell-walls. This is Endo-1,4-beta-xylanase I (XYL1) from Cochliobolus carbonum (Maize leaf spot fungus).